The sequence spans 101 residues: Citrate lyase acyl carrier protein (101 aa).

Serine 14 carries the O-(phosphoribosyl dephospho-coenzyme A)serine modification.

Belongs to the CitD family. Oligomer with a subunit composition of (alpha,beta,gamma)6.

Its subcellular location is the cytoplasm. Its function is as follows. Covalent carrier of the coenzyme of citrate lyase. This Clostridium perfringens (strain 13 / Type A) protein is Citrate lyase acyl carrier protein.